Here is a 567-residue protein sequence, read N- to C-terminus: uncharacterized protein (567 aa).

Helical transmembrane passes span 20 to 40, 69 to 89, 95 to 115, 126 to 146, 168 to 188, and 528 to 548; these read FTILAFFYISSIFFLLCSGVL, SLETAWYLISAVAVFIASVFI, AYLTLLAITWIVLTITDVALI, ILLNILYNLFGAILLSLFMCL, IPLVSAIIIAILITAVIYLLF, and IFGSSIMDILKYIFGLGLLAI.

The protein resides in the cell membrane. This is an uncharacterized protein from Escherichia coli (strain K12).